The chain runs to 303 residues: Phosphoribosylaminoimidazole-succinocarboxamide synthase (303 aa).

The protein belongs to the SAICAR synthetase family.

The enzyme catalyses 5-amino-1-(5-phospho-D-ribosyl)imidazole-4-carboxylate + L-aspartate + ATP = (2S)-2-[5-amino-1-(5-phospho-beta-D-ribosyl)imidazole-4-carboxamido]succinate + ADP + phosphate + 2 H(+). Its pathway is purine metabolism; IMP biosynthesis via de novo pathway; 5-amino-1-(5-phospho-D-ribosyl)imidazole-4-carboxamide from 5-amino-1-(5-phospho-D-ribosyl)imidazole-4-carboxylate: step 1/2. This is Phosphoribosylaminoimidazole-succinocarboxamide synthase (ADE1) from Pichia angusta (Yeast).